Here is an 804-residue protein sequence, read N- to C-terminus: Ral guanine nucleotide dissociation stimulator-like 1 (804 aa).

An N-terminal Ras-GEF domain is found at Lys101–Arg231. The Ras-GEF domain maps to Glu270–Leu539. Disordered stretches follow at residues Asn564–His611 and Ser640–Pro676. Composition is skewed to low complexity over residues Pro581 to Met607 and Ser640 to Thr649. A compositionally biased stretch (polar residues) spans Ile661 to Ser671. In terms of domain architecture, Ras-associating spans Asp684–Ser771.

In terms of biological role, probable guanine nucleotide exchange factor. The polypeptide is Ral guanine nucleotide dissociation stimulator-like 1 (rgl1) (Danio rerio (Zebrafish)).